The primary structure comprises 456 residues: MTQLTCFKAYDIRGELGEELNEDIAYRIGRAYGEFLKPGKIVVGGDVRLTSESLKLALARGLMDAGTDVLDIGLSGTEEIYFATFHLGVDGGIEVTASHNPMNYNGMKLVRENAKPISGDTGLRDIQRLAEENQFPPVDPARRGTLRQISVLKEYVDHLMGYVDLANFTRPLKLVVNSGNGAAGHVIDEVEKRFAAAGVPVTFIKVHHQPDGHFPNGIPNPLLPECRQDTADAVREHQADMGIAFDGDFDRCFLFDDEASFIEGYYIVGLLAEAFLQKQPGAKIIHDPRLTWNTVDIVTRNGGQPVMSKTGHAFIKERMRQEDAIYGGEMSAHHYFRDFAYCDSGMIPWLLVAELLCLKNSSLKSLVADRQAAFPASGEINRKLGNAAEAIARIRAQYEPAAAHIDTTDGISIEYPEWRFNLRTSNTEPVVRLNVESRADTALMNAKTEEILALLK.

The active-site Phosphoserine intermediate is S98. Mg(2+)-binding residues include S98, D246, D248, and D250.

Belongs to the phosphohexose mutase family. The cofactor is Mg(2+).

The catalysed reaction is alpha-D-mannose 1-phosphate = D-mannose 6-phosphate. It functions in the pathway nucleotide-sugar biosynthesis; GDP-alpha-D-mannose biosynthesis; alpha-D-mannose 1-phosphate from D-fructose 6-phosphate: step 2/2. The protein operates within bacterial outer membrane biogenesis; LPS O-antigen biosynthesis. In terms of biological role, involved in GDP-mannose biosynthesis which serves as the activated sugar nucleotide precursor for mannose residues in cell surface polysaccharides. This enzyme participates in synthesis of the LPS O9 antigen. This Escherichia coli protein is Phosphomannomutase (manB).